We begin with the raw amino-acid sequence, 131 residues long: Small ribosomal subunit protein uS11 (131 aa).

It belongs to the universal ribosomal protein uS11 family. In terms of assembly, part of the 30S ribosomal subunit. Interacts with proteins S7 and S18. Binds to IF-3.

Functionally, located on the platform of the 30S subunit, it bridges several disparate RNA helices of the 16S rRNA. Forms part of the Shine-Dalgarno cleft in the 70S ribosome. This chain is Small ribosomal subunit protein uS11, found in Dictyoglomus turgidum (strain DSM 6724 / Z-1310).